The following is a 432-amino-acid chain: uncharacterized protein (432 aa).

The residue at position 243 (Lys-243) is an N6-(pyridoxal phosphate)lysine.

The protein belongs to the class-II pyridoxal-phosphate-dependent aminotransferase family. Pyridoxal 5'-phosphate serves as cofactor.

Its subcellular location is the cytoplasm. This is an uncharacterized protein from Methanocaldococcus jannaschii (strain ATCC 43067 / DSM 2661 / JAL-1 / JCM 10045 / NBRC 100440) (Methanococcus jannaschii).